The primary structure comprises 180 residues: Inner membrane-spanning protein YciB (180 aa).

5 helical membrane passes run Gln-25–Ile-45, Val-49–Ile-69, Ile-76–Ile-96, Ile-118–Val-138, and Phe-150–Leu-170.

It belongs to the YciB family.

The protein localises to the cell inner membrane. Functionally, plays a role in cell envelope biogenesis, maintenance of cell envelope integrity and membrane homeostasis. In Rickettsia prowazekii (strain Madrid E), this protein is Inner membrane-spanning protein YciB.